Consider the following 419-residue polypeptide: Carboxypeptidase A1 (419 aa).

The signal sequence occupies residues 1–16 (MKRLLILSLLLEAVCG). A propeptide spans 17–110 (NENFVGHQVL…KQQMSAFQAR (94 aa)) (activation peptide). Residues 121 to 414 (TYHTLDEIYE…LALLTIMDHT (294 aa)) enclose the Peptidase M14 domain. Histidine 179 and glutamate 182 together coordinate Zn(2+). Substrate-binding positions include 179 to 182 (HSRE), arginine 237, and 254 to 255 (NR). Cysteine 248 and cysteine 271 are joined by a disulfide. A Zn(2+)-binding site is contributed by histidine 306. Substrate is bound by residues 307–308 (SY) and tyrosine 358. Residue glutamate 380 is the Proton donor/acceptor of the active site.

This sequence belongs to the peptidase M14 family. Monomer. May form a complex with proelastase 2. Zn(2+) is required as a cofactor.

Its subcellular location is the secreted. It carries out the reaction Release of a C-terminal amino acid, but little or no action with -Asp, -Glu, -Arg, -Lys or -Pro.. It catalyses the reaction leukotriene C4 + H2O = leukotriene F4 + glycine. Its function is as follows. Carboxypeptidase that catalyzes the release of a C-terminal amino acid, but has little or no action with -Asp, -Glu, -Arg, -Lys or -Pro. Catalyzes the conversion of leukotriene C4 to leukotriene F4 via the hydrolysis of an amide bond. This Rattus norvegicus (Rat) protein is Carboxypeptidase A1.